A 245-amino-acid chain; its full sequence is Small ribosomal subunit protein uS2 (245 aa).

A disordered region spans residues 226 to 245 (GGGANVGEMENPPVEATADA).

Belongs to the universal ribosomal protein uS2 family.

This chain is Small ribosomal subunit protein uS2, found in Erythrobacter litoralis (strain HTCC2594).